We begin with the raw amino-acid sequence, 374 residues long: Pulmonary surfactant-associated protein D (374 aa).

An N-terminal signal peptide occupies residues 1 to 19; it reads MLPFLSMLVLLVQPLGNLG. S-nitrosocysteine is present on residues Cys34 and Cys39. Positions 38–222 are disordered; the sequence is MCSPTENGLP…GIKGESGLPD (185 aa). Positions 45 to 221 constitute a Collagen-like domain; it reads GLPGRDGRDG…RGIKGESGLP (177 aa). The span at 49-64 shows a compositional bias: basic and acidic residues; sequence RDGRDGREGPRGEKGD. A compositionally biased stretch (low complexity) spans 70-79; the sequence is PMGLSGLQGP. Asn89 carries N-linked (GlcNAc...) asparagine glycosylation. Composition is skewed to low complexity over residues 137–149 and 169–200; these read KGEAGPKGEVGAP and APGVQGAPGNAGAAGPAGPAGPQGAPGSRGPP. Positions 203-215 are enriched in basic and acidic residues; sequence KGDRGVPGDRGIK. The stretch at 222-253 forms a coiled coil; sequence DSAALRQQMEALKGKLQRLEVAFSHYQKAALF. The 116-residue stretch at 259–374 folds into the C-type lectin domain; it reads VGDKIFRTAD…GEQRLVICEF (116 aa). 2 disulfides stabilise this stretch: Cys280–Cys372 and Cys350–Cys364.

The protein belongs to the SFTPD family. In terms of assembly, oligomeric complex of 4 set of homotrimers. S-nitrosylation at Cys-34 and Cys-39 alters the quaternary structure which results in a pro-inflammatory chemoattractive signaling activity with macrophages.

The protein resides in the secreted. It is found in the extracellular space. The protein localises to the extracellular matrix. It localises to the surface film. In terms of biological role, contributes to the lung's defense against inhaled microorganisms, organic antigens and toxins. Interacts with compounds such as bacterial lipopolysaccharides, oligosaccharides and fatty acids and modulates leukocyte action in immune response. May participate in the extracellular reorganization or turnover of pulmonary surfactant. Binds strongly maltose residues and to a lesser extent other alpha-glucosyl moieties. This is Pulmonary surfactant-associated protein D (Sftpd) from Mus musculus (Mouse).